Here is a 618-residue protein sequence, read N- to C-terminus: DNA mismatch repair protein MutL (618 aa).

Over residues 367–381 (EPTAAREPATPRYSG) the composition is skewed to low complexity. A disordered region spans residues 367-402 (EPTAAREPATPRYSGGASGGNGGRQSAGGWPHAQPG). Gly residues predominate over residues 382-392 (GASGGNGGRQS).

It belongs to the DNA mismatch repair MutL/HexB family.

This protein is involved in the repair of mismatches in DNA. It is required for dam-dependent methyl-directed DNA mismatch repair. May act as a 'molecular matchmaker', a protein that promotes the formation of a stable complex between two or more DNA-binding proteins in an ATP-dependent manner without itself being part of a final effector complex. In Salmonella heidelberg (strain SL476), this protein is DNA mismatch repair protein MutL.